The sequence spans 629 residues: tRNA uridine 5-carboxymethylaminomethyl modification enzyme MnmG (629 aa).

FAD is bound by residues 14 to 19 (GAGHAG), Val126, and Ser181. 273–287 (GPRYCPSIEDKVVRF) contacts NAD(+). Residue Gln370 coordinates FAD.

It belongs to the MnmG family. As to quaternary structure, homodimer. Heterotetramer of two MnmE and two MnmG subunits. FAD is required as a cofactor.

It is found in the cytoplasm. Its function is as follows. NAD-binding protein involved in the addition of a carboxymethylaminomethyl (cmnm) group at the wobble position (U34) of certain tRNAs, forming tRNA-cmnm(5)s(2)U34. This chain is tRNA uridine 5-carboxymethylaminomethyl modification enzyme MnmG, found in Geobacillus thermodenitrificans (strain NG80-2).